Here is a 380-residue protein sequence, read N- to C-terminus: Actinidain (380 aa).

A signal peptide spans 1-24; that stretch reads MGLPKSFVSMSLLFFSTLLILSLA. The propeptide at 25–126 is activation peptide; that stretch reads FNAKNLTQRT…NRYEPRVGQV (102 aa). Residues N29, N81, and N111 are each glycosylated (N-linked (GlcNAc...) asparagine). Disulfide bonds link C148–C191, C182–C224, and C282–C332. Residue C151 is part of the active site. Residues H288 and N308 contribute to the active site.

The protein belongs to the peptidase C1 family. In terms of tissue distribution, fruit, present in small cells of the outer pericarp of mature fruit, but not large cells.

It carries out the reaction Specificity close to that of papain.. Functionally, cysteine protease responsible for the cleavage of kiwellin into kissper and KiTH. In Actinidia deliciosa (Kiwi), this protein is Actinidain.